Reading from the N-terminus, the 34-residue chain is Photosystem II reaction center protein Psb30 (34 aa).

Residues 6–26 (VIGQLIATGAIMLAGPAVIVL) traverse the membrane as a helical segment.

Belongs to the Psb30/Ycf12 family. In terms of assembly, PSII is composed of 1 copy each of membrane proteins PsbA, PsbB, PsbC, PsbD, PsbE, PsbF, PsbH, PsbI, PsbJ, PsbK, PsbL, PsbM, PsbT, PsbX, PsbY, PsbZ, Psb30/Ycf12, peripheral proteins of the oxygen-evolving complex and a large number of cofactors. It forms dimeric complexes.

The protein resides in the plastid. Its subcellular location is the chloroplast thylakoid membrane. In terms of biological role, a core subunit of photosystem II (PSII), probably helps stabilize the reaction center. The protein is Photosystem II reaction center protein Psb30 of Trieres chinensis (Marine centric diatom).